We begin with the raw amino-acid sequence, 475 residues long: Coagulation factor X (475 aa).

A signal peptide spans 1–20 (MAGRLLLLLLCAALPDELRA). Residues 21-40 (EGGVFIKKESADKFLERTKR) constitute a propeptide that is removed on maturation. The Gla domain occupies 41–85 (ANSFLEEMKQGNIERECNEERCSKEEAREAFEDNEKTEEFWNIYV). 11 positions are modified to 4-carboxyglutamate: E46, E47, E54, E56, E59, E60, E65, E66, E69, E72, and E79. A disulfide bridge links C57 with C62. In terms of domain architecture, EGF-like 1; calcium-binding spans 86-122 (DGDQCSSNPCHYGGQCKDGLGSYTCSCLDGYQGKNCE). 11 disulfides stabilise this stretch: C90–C101, C95–C110, C112–C121, C129–C140, C136–C152, C154–C167, C175–C348, C247–C252, C267–C283, C396–C410, and C421–C449. D103 carries the (3R)-3-hydroxyaspartate modification. One can recognise an EGF-like 2 domain in the interval 125–168 (IPKYCKINNGDCEQFCSIKKSVQKDVVCSCTSGYELAEDGKQCV). The propeptide at 186–240 (SVILPTNSNTNATSDQDVPSTNGSILEEVFTTTTESPTPPPRNGSSITDPNVDTR) is activation peptide. N-linked (GlcNAc...) asparagine glycosylation is found at N196, N207, and N228. Residues 216-237 (TTTTESPTPPPRNGSSITDPNV) form a disordered region. Positions 241-473 (IVGGDECRPG…FLRWVRTVMR (233 aa)) constitute a Peptidase S1 domain. Catalysis depends on H282, which acts as the Charge relay system. N285 carries N-linked (GlcNAc...) asparagine glycosylation. The active-site Charge relay system is D328. Residue S425 is the Charge relay system of the active site.

Belongs to the peptidase S1 family. The two chains are formed from a single-chain precursor by the excision of two Arg residues and are held together by 1 or more disulfide bonds. In terms of processing, the vitamin K-dependent, enzymatic carboxylation of some glutamate residues allows the modified protein to bind calcium. The activation peptide is cleaved by factor IXa (in the intrinsic pathway), or by factor VIIa (in the extrinsic pathway). Post-translationally, the iron and 2-oxoglutarate dependent 3-hydroxylation of aspartate and asparagine is (R) stereospecific within EGF domains. As to expression, liver and chorioallantoic membrane.

It localises to the secreted. The catalysed reaction is Selective cleavage of Arg-|-Thr and then Arg-|-Ile bonds in prothrombin to form thrombin.. Factor Xa is a vitamin K-dependent glycoprotein that converts prothrombin to thrombin in the presence of factor Va, calcium and phospholipid during blood clotting. VAP cleaves the fusion proteins of Sendai virus, NDV, and influenza virus a at a specific single arginine-containing site, and plays a key role in the viral spreading in the allantoic sac. The sequence is that of Coagulation factor X (F10) from Gallus gallus (Chicken).